The sequence spans 572 residues: Phosphoenolpyruvate-protein phosphotransferase (572 aa).

H190 functions as the Tele-phosphohistidine intermediate in the catalytic mechanism. The phosphoenolpyruvate site is built by R297 and R333. 2 residues coordinate Mg(2+): E432 and D456. Phosphoenolpyruvate contacts are provided by residues 455–456 (ND) and R466. Catalysis depends on C503, which acts as the Proton donor.

Belongs to the PEP-utilizing enzyme family. Homodimer. Mg(2+) is required as a cofactor.

Its subcellular location is the cytoplasm. The enzyme catalyses L-histidyl-[protein] + phosphoenolpyruvate = N(pros)-phospho-L-histidyl-[protein] + pyruvate. Its function is as follows. General (non sugar-specific) component of the phosphoenolpyruvate-dependent sugar phosphotransferase system (sugar PTS). This major carbohydrate active-transport system catalyzes the phosphorylation of incoming sugar substrates concomitantly with their translocation across the cell membrane. Enzyme I transfers the phosphoryl group from phosphoenolpyruvate (PEP) to the phosphoryl carrier protein (HPr). This Listeria monocytogenes serovar 1/2a (strain ATCC BAA-679 / EGD-e) protein is Phosphoenolpyruvate-protein phosphotransferase (ptsI).